The following is a 235-amino-acid chain: uncharacterized protein (235 aa).

This is an uncharacterized protein from Shigella flexneri.